Reading from the N-terminus, the 92-residue chain is ATP synthase subunit c (92 aa).

2 helical membrane passes run 20-40 (GAGL…GTGL) and 71-91 (MAIS…LVFV).

It belongs to the ATPase C chain family. F-type ATPases have 2 components, F(1) - the catalytic core - and F(0) - the membrane proton channel. F(1) has five subunits: alpha(3), beta(3), gamma(1), delta(1), epsilon(1). F(0) has three main subunits: a(1), b(2) and c(10-14). The alpha and beta chains form an alternating ring which encloses part of the gamma chain. F(1) is attached to F(0) by a central stalk formed by the gamma and epsilon chains, while a peripheral stalk is formed by the delta and b chains.

Its subcellular location is the cell membrane. F(1)F(0) ATP synthase produces ATP from ADP in the presence of a proton or sodium gradient. F-type ATPases consist of two structural domains, F(1) containing the extramembraneous catalytic core and F(0) containing the membrane proton channel, linked together by a central stalk and a peripheral stalk. During catalysis, ATP synthesis in the catalytic domain of F(1) is coupled via a rotary mechanism of the central stalk subunits to proton translocation. Functionally, key component of the F(0) channel; it plays a direct role in translocation across the membrane. A homomeric c-ring of between 10-14 subunits forms the central stalk rotor element with the F(1) delta and epsilon subunits. This chain is ATP synthase subunit c, found in Mycoplasmopsis pulmonis (strain UAB CTIP) (Mycoplasma pulmonis).